Here is a 230-residue protein sequence, read N- to C-terminus: Sugar fermentation stimulation protein homolog (230 aa).

The protein belongs to the SfsA family.

The chain is Sugar fermentation stimulation protein homolog from Clostridium botulinum (strain ATCC 19397 / Type A).